The chain runs to 374 residues: MEALIASTSFFVPISNSSSSHIINNRFFPSFYSPNLNFGTFRKTSLSSSHLVFSSSAISAPPSSTVLTRNSYWMVLLDKPPHWVSSKSAMVDYYVEILAKVLGNEKDAQVSIYDASFDTHFGFCCHIDEDASRQLASLPGVVSIRPEQDYSSEKKNYGIGSHKGVSLFDHGTVKHWMVRIDKPGVGIVTKAQMVDHCVQLLSKVLWNEKDAQMCLYHVSWQSDFGFCCDLDERSAVELAGVPGVLAVVPDNSFESLNKDYEGDSTQDSRDQDDSESPPVKTKKLFITGLSFYTSEKTLRAAFEGFGELVEVKIIMDKISKRSKGYAFLEYTTEEAAGTALKEMNGKIINGWMIVVDVAKTKPFRQNRSQPSFGL.

A chloroplast-targeting transit peptide spans 1 to 54 (MEALIASTSFFVPISNSSSSHIINNRFFPSFYSPNLNFGTFRKTSLSSSHLVFS). Residues 258–271 (KDYEGDSTQDSRDQ) are compositionally biased toward basic and acidic residues. A disordered region spans residues 258–279 (KDYEGDSTQDSRDQDDSESPPV). The RRM domain maps to 282–360 (KKLFITGLSF…WMIVVDVAKT (79 aa)).

Interacts with PCMP-H51/CRR28 and PCMP-H12/OTP82. Interacts with MORF8/RIP1, MORF2/RIP2 and VAR3/OZ1.

It is found in the plastid. It localises to the chloroplast. Involved in C-to-U editing of chloroplastic RNA. Functions as major chloroplastic editing factor. Controls 62 percent of the chloroplastic editing sites. Binds RNA close to ORRM1-dependent editing sites in vitro. Binds the editing recognition trans-factors PCMP-H51/CRR28 and PCMP-H12/OTP82. The protein is Organelle RRM domain-containing protein 1, chloroplastic of Arabidopsis thaliana (Mouse-ear cress).